The primary structure comprises 253 residues: uncharacterized protein (253 aa).

10-35 (ISGAASKRGIGRATAELFASHGARVA) is a binding site for NADP(+). Ser-144 contributes to the substrate binding site. Tyr-159 acts as the Proton acceptor in catalysis.

This sequence belongs to the short-chain dehydrogenases/reductases (SDR) family.

This is an uncharacterized protein from Sinorhizobium fredii (strain NBRC 101917 / NGR234).